The following is a 737-amino-acid chain: Polyribonucleotide nucleotidyltransferase (737 aa).

The Mg(2+) site is built by Asp-489 and Asp-495. Positions 556–615 (PKIDTIKIDVDKIKIVIGKGGETIDKIIAETGVKIDIDEEGNVSIYSSDQDAINRAKEII) constitute a KH domain. Residues 625-693 (DEVYRAKVVR…EKGRIDASMK (69 aa)) enclose the S1 motif domain. The disordered stretch occupies residues 691–737 (SMKALLPRPPKPEHDEKGEKSERPHRPRHHKDHKPKKEFTETPKDSE). Residues 700–714 (PKPEHDEKGEKSERP) are compositionally biased toward basic and acidic residues. A compositionally biased stretch (basic residues) spans 715–724 (HRPRHHKDHK). Residues 725–737 (PKKEFTETPKDSE) show a composition bias toward basic and acidic residues.

The protein belongs to the polyribonucleotide nucleotidyltransferase family. Requires Mg(2+) as cofactor.

Its subcellular location is the cytoplasm. It catalyses the reaction RNA(n+1) + phosphate = RNA(n) + a ribonucleoside 5'-diphosphate. Its function is as follows. Involved in mRNA degradation. Catalyzes the phosphorolysis of single-stranded polyribonucleotides processively in the 3'- to 5'-direction. The chain is Polyribonucleotide nucleotidyltransferase from Streptococcus pneumoniae serotype 19F (strain G54).